Consider the following 613-residue polypeptide: Dihydroxy-acid dehydratase (613 aa).

Asp-81 contributes to the Mg(2+) binding site. [2Fe-2S] cluster is bound at residue Cys-122. The Mg(2+) site is built by Asp-123 and Lys-124. Position 124 is an N6-carboxylysine (Lys-124). Cys-195 is a [2Fe-2S] cluster binding site. A Mg(2+)-binding site is contributed by Glu-491. The Proton acceptor role is filled by Ser-517.

Belongs to the IlvD/Edd family. As to quaternary structure, homodimer. The cofactor is [2Fe-2S] cluster. Mg(2+) is required as a cofactor.

It carries out the reaction (2R)-2,3-dihydroxy-3-methylbutanoate = 3-methyl-2-oxobutanoate + H2O. The catalysed reaction is (2R,3R)-2,3-dihydroxy-3-methylpentanoate = (S)-3-methyl-2-oxopentanoate + H2O. Its pathway is amino-acid biosynthesis; L-isoleucine biosynthesis; L-isoleucine from 2-oxobutanoate: step 3/4. It participates in amino-acid biosynthesis; L-valine biosynthesis; L-valine from pyruvate: step 3/4. In terms of biological role, functions in the biosynthesis of branched-chain amino acids. Catalyzes the dehydration of (2R,3R)-2,3-dihydroxy-3-methylpentanoate (2,3-dihydroxy-3-methylvalerate) into 2-oxo-3-methylpentanoate (2-oxo-3-methylvalerate) and of (2R)-2,3-dihydroxy-3-methylbutanoate (2,3-dihydroxyisovalerate) into 2-oxo-3-methylbutanoate (2-oxoisovalerate), the penultimate precursor to L-isoleucine and L-valine, respectively. This Aliivibrio fischeri (strain ATCC 700601 / ES114) (Vibrio fischeri) protein is Dihydroxy-acid dehydratase.